The following is a 695-amino-acid chain: UvrABC system protein B (695 aa).

The Helicase ATP-binding domain maps to 31–414 (EGIESGLSFQ…EIQRSGQIAE (384 aa)). Residue 44 to 51 (GVTGSGKT) participates in ATP binding. Residues 97-120 (YYDYYQPEAYVPSRDLFIEKDSSI) carry the Beta-hairpin motif. In terms of domain architecture, Helicase C-terminal spans 435 to 601 (QVDDLMSEVS…GVNKRIKDLI (167 aa)). In terms of domain architecture, UVR spans 632–667 (AKEIQRLEKSMLEAARNMEFEQAAQYRDEIKNLRSK).

It belongs to the UvrB family. As to quaternary structure, forms a heterotetramer with UvrA during the search for lesions. Interacts with UvrC in an incision complex.

Its subcellular location is the cytoplasm. The UvrABC repair system catalyzes the recognition and processing of DNA lesions. A damage recognition complex composed of 2 UvrA and 2 UvrB subunits scans DNA for abnormalities. Upon binding of the UvrA(2)B(2) complex to a putative damaged site, the DNA wraps around one UvrB monomer. DNA wrap is dependent on ATP binding by UvrB and probably causes local melting of the DNA helix, facilitating insertion of UvrB beta-hairpin between the DNA strands. Then UvrB probes one DNA strand for the presence of a lesion. If a lesion is found the UvrA subunits dissociate and the UvrB-DNA preincision complex is formed. This complex is subsequently bound by UvrC and the second UvrB is released. If no lesion is found, the DNA wraps around the other UvrB subunit that will check the other stand for damage. The sequence is that of UvrABC system protein B from Nitrosomonas europaea (strain ATCC 19718 / CIP 103999 / KCTC 2705 / NBRC 14298).